The following is a 313-amino-acid chain: Porphobilinogen deaminase (313 aa).

Cysteine 242 is subject to S-(dipyrrolylmethanemethyl)cysteine.

This sequence belongs to the HMBS family. Monomer. Requires dipyrromethane as cofactor.

It catalyses the reaction 4 porphobilinogen + H2O = hydroxymethylbilane + 4 NH4(+). The protein operates within porphyrin-containing compound metabolism; protoporphyrin-IX biosynthesis; coproporphyrinogen-III from 5-aminolevulinate: step 2/4. Its function is as follows. Tetrapolymerization of the monopyrrole PBG into the hydroxymethylbilane pre-uroporphyrinogen in several discrete steps. The sequence is that of Porphobilinogen deaminase from Pseudomonas syringae pv. tomato (strain ATCC BAA-871 / DC3000).